A 398-amino-acid polypeptide reads, in one-letter code: Beta-1,6-galactosyltransferase GALT29A (398 aa).

Topologically, residues 1-6 (MKRSVR) are cytoplasmic. A helical; Signal-anchor for type II membrane protein transmembrane segment spans residues 7–27 (PLFSALLFAFFAATLICRVAI). At 28 to 398 (RRSSFSFASA…FKIPLVQVYH (371 aa)) the chain is on the lumenal side. Residues N221 and N346 are each glycosylated (N-linked (GlcNAc...) asparagine).

The protein belongs to the glycosyltransferase 29 family. Interacts with GALT31A.

It is found in the golgi apparatus membrane. Galactosyltransferase involved in the biosynthesis of type II arabinogalactan. Possesses galactosyltransferase (GalT) activity in vitro, transferring galactose from UDP-galactose to a mixture of various oligosaccharides derived from arabinogalactan proteins. Forms a complex with GALT31A that can work cooperatively to enhance the activities of adding galactose residues at O6 positions to beta-1,6-galactan and beta-1,3-galactan. In Arabidopsis thaliana (Mouse-ear cress), this protein is Beta-1,6-galactosyltransferase GALT29A.